Here is a 259-residue protein sequence, read N- to C-terminus: Acetylglutamate kinase (259 aa).

Substrate-binding positions include 45–46 (GG), Arg67, and Asn159.

This sequence belongs to the acetylglutamate kinase family. ArgB subfamily.

It is found in the cytoplasm. The catalysed reaction is N-acetyl-L-glutamate + ATP = N-acetyl-L-glutamyl 5-phosphate + ADP. It participates in amino-acid biosynthesis; L-arginine biosynthesis; N(2)-acetyl-L-ornithine from L-glutamate: step 2/4. In terms of biological role, catalyzes the ATP-dependent phosphorylation of N-acetyl-L-glutamate. The sequence is that of Acetylglutamate kinase from Aeromonas salmonicida (strain A449).